The following is a 437-amino-acid chain: Enolase (437 aa).

Residue glutamine 162 participates in (2R)-2-phosphoglycerate binding. The active-site Proton donor is glutamate 204. Positions 251, 297, and 324 each coordinate Mg(2+). (2R)-2-phosphoglycerate-binding residues include lysine 349, arginine 378, serine 379, and lysine 400. The Proton acceptor role is filled by lysine 349.

Belongs to the enolase family. Mg(2+) is required as a cofactor.

It localises to the cytoplasm. Its subcellular location is the secreted. The protein resides in the cell surface. It carries out the reaction (2R)-2-phosphoglycerate = phosphoenolpyruvate + H2O. It functions in the pathway carbohydrate degradation; glycolysis; pyruvate from D-glyceraldehyde 3-phosphate: step 4/5. Functionally, catalyzes the reversible conversion of 2-phosphoglycerate (2-PG) into phosphoenolpyruvate (PEP). It is essential for the degradation of carbohydrates via glycolysis. The polypeptide is Enolase (Pelodictyon phaeoclathratiforme (strain DSM 5477 / BU-1)).